Here is a 558-residue protein sequence, read N- to C-terminus: Protein S10 (558 aa).

The interval 539 to 558 is disordered; sequence SSNTSSHEHTQKIVLNKVTR.

The chain is Protein S10 (S10) from Avena sativa (Oat).